Here is a 168-residue protein sequence, read N- to C-terminus: Ubiquitin-conjugating enzyme E2 2 (168 aa).

Residues 4-150 enclose the UBC core domain; the sequence is PAKRRLMRDF…VRETVENSWN (147 aa). Catalysis depends on Cys-88, which acts as the Glycyl thioester intermediate. The disordered stretch occupies residues 143-168; it reads ETVENSWNEDDEDEDEDEDEDIDDAE. Acidic residues predominate over residues 149-168; that stretch reads WNEDDEDEDEDEDEDIDDAE.

The protein belongs to the ubiquitin-conjugating enzyme family.

The protein localises to the cytoplasm. It is found in the nucleus. The catalysed reaction is S-ubiquitinyl-[E1 ubiquitin-activating enzyme]-L-cysteine + [E2 ubiquitin-conjugating enzyme]-L-cysteine = [E1 ubiquitin-activating enzyme]-L-cysteine + S-ubiquitinyl-[E2 ubiquitin-conjugating enzyme]-L-cysteine.. The protein operates within protein modification; protein ubiquitination. Its function is as follows. Catalyzes the covalent attachment of ubiquitin to other proteins. Plays a role in transcription regulation by catalyzing the monoubiquitination of histone H2B to form H2BK123ub1. H2BK123ub1 gives a specific tag for epigenetic transcriptional activation and is also a prerequisite for H3K4me and H3K79me formation. Also involved in postreplication repair of UV-damaged DNA, in N-end rule-dependent protein degradation and in sporulation. The sequence is that of Ubiquitin-conjugating enzyme E2 2 (UBC2) from Debaryomyces hansenii (strain ATCC 36239 / CBS 767 / BCRC 21394 / JCM 1990 / NBRC 0083 / IGC 2968) (Yeast).